A 313-amino-acid chain; its full sequence is Aspartate carbamoyltransferase catalytic subunit (313 aa).

Residues Arg58 and Thr59 each coordinate carbamoyl phosphate. Lys86 contacts L-aspartate. 3 residues coordinate carbamoyl phosphate: Arg108, His136, and Gln139. Arg169 and Arg223 together coordinate L-aspartate. 2 residues coordinate carbamoyl phosphate: Gly264 and Pro265.

This sequence belongs to the aspartate/ornithine carbamoyltransferase superfamily. ATCase family. In terms of assembly, heterododecamer (2C3:3R2) of six catalytic PyrB chains organized as two trimers (C3), and six regulatory PyrI chains organized as three dimers (R2).

The catalysed reaction is carbamoyl phosphate + L-aspartate = N-carbamoyl-L-aspartate + phosphate + H(+). The protein operates within pyrimidine metabolism; UMP biosynthesis via de novo pathway; (S)-dihydroorotate from bicarbonate: step 2/3. In terms of biological role, catalyzes the condensation of carbamoyl phosphate and aspartate to form carbamoyl aspartate and inorganic phosphate, the committed step in the de novo pyrimidine nucleotide biosynthesis pathway. This Ruminiclostridium cellulolyticum (strain ATCC 35319 / DSM 5812 / JCM 6584 / H10) (Clostridium cellulolyticum) protein is Aspartate carbamoyltransferase catalytic subunit.